The primary structure comprises 226 residues: DNA mismatch repair protein MutH (226 aa).

Belongs to the MutH family.

It is found in the cytoplasm. Functionally, sequence-specific endonuclease that cleaves unmethylated GATC sequences. It is involved in DNA mismatch repair. In Actinobacillus pleuropneumoniae serotype 3 (strain JL03), this protein is DNA mismatch repair protein MutH.